The sequence spans 401 residues: Imidazolonepropionase (401 aa).

Positions 70 and 72 each coordinate Fe(3+). 2 residues coordinate Zn(2+): histidine 70 and histidine 72. The 4-imidazolone-5-propanoate site is built by arginine 79, tyrosine 142, and histidine 175. Tyrosine 142 serves as a coordination point for N-formimidoyl-L-glutamate. Residue histidine 240 participates in Fe(3+) binding. Histidine 240 provides a ligand contact to Zn(2+). Glutamine 243 is a 4-imidazolone-5-propanoate binding site. Aspartate 315 contributes to the Fe(3+) binding site. Aspartate 315 contacts Zn(2+). N-formimidoyl-L-glutamate contacts are provided by asparagine 317 and glycine 319. 4-imidazolone-5-propanoate is bound at residue threonine 320.

Belongs to the metallo-dependent hydrolases superfamily. HutI family. Zn(2+) is required as a cofactor. It depends on Fe(3+) as a cofactor.

It localises to the cytoplasm. The enzyme catalyses 4-imidazolone-5-propanoate + H2O = N-formimidoyl-L-glutamate. The protein operates within amino-acid degradation; L-histidine degradation into L-glutamate; N-formimidoyl-L-glutamate from L-histidine: step 3/3. Functionally, catalyzes the hydrolytic cleavage of the carbon-nitrogen bond in imidazolone-5-propanoate to yield N-formimidoyl-L-glutamate. It is the third step in the universal histidine degradation pathway. In Caulobacter sp. (strain K31), this protein is Imidazolonepropionase.